The primary structure comprises 208 residues: LexA repressor (208 aa).

Residues 28–48 (VREIGEAVGLASSSTVHGHLA) constitute a DNA-binding region (H-T-H motif). Residues Ser-130 and Lys-168 each act as for autocatalytic cleavage activity in the active site.

This sequence belongs to the peptidase S24 family. Homodimer.

The enzyme catalyses Hydrolysis of Ala-|-Gly bond in repressor LexA.. In terms of biological role, represses a number of genes involved in the response to DNA damage (SOS response), including recA and lexA. In the presence of single-stranded DNA, RecA interacts with LexA causing an autocatalytic cleavage which disrupts the DNA-binding part of LexA, leading to derepression of the SOS regulon and eventually DNA repair. The polypeptide is LexA repressor (Shouchella clausii (strain KSM-K16) (Alkalihalobacillus clausii)).